A 360-amino-acid polypeptide reads, in one-letter code: DNA replication and repair protein RecF (360 aa).

30–37 provides a ligand contact to ATP; it reads GQNGSGKT.

The protein belongs to the RecF family.

The protein resides in the cytoplasm. In terms of biological role, the RecF protein is involved in DNA metabolism; it is required for DNA replication and normal SOS inducibility. RecF binds preferentially to single-stranded, linear DNA. It also seems to bind ATP. The sequence is that of DNA replication and repair protein RecF from Shewanella piezotolerans (strain WP3 / JCM 13877).